A 377-amino-acid chain; its full sequence is Ribosomal RNA large subunit methyltransferase G (377 aa).

The protein belongs to the methyltransferase superfamily. RlmG family.

The protein localises to the cytoplasm. It carries out the reaction guanosine(1835) in 23S rRNA + S-adenosyl-L-methionine = N(2)-methylguanosine(1835) in 23S rRNA + S-adenosyl-L-homocysteine + H(+). Functionally, specifically methylates the guanine in position 1835 (m2G1835) of 23S rRNA. The polypeptide is Ribosomal RNA large subunit methyltransferase G (Aeromonas salmonicida (strain A449)).